A 91-amino-acid polypeptide reads, in one-letter code: Probable Fe(2+)-trafficking protein (91 aa).

The protein belongs to the Fe(2+)-trafficking protein family.

Functionally, could be a mediator in iron transactions between iron acquisition and iron-requiring processes, such as synthesis and/or repair of Fe-S clusters in biosynthetic enzymes. The chain is Probable Fe(2+)-trafficking protein from Shewanella denitrificans (strain OS217 / ATCC BAA-1090 / DSM 15013).